The chain runs to 612 residues: Sulfite reductase [NADPH] hemoprotein beta-component (612 aa).

The tract at residues 1–26 is disordered; it reads MDDHKPIETPDGPAVDTPGIGARRYE. [4Fe-4S] cluster-binding residues include Cys469, Cys475, Cys514, and Cys518. Cys518 is a siroheme binding site.

The protein belongs to the nitrite and sulfite reductase 4Fe-4S domain family. As to quaternary structure, alpha(8)-beta(8). The alpha component is a flavoprotein, the beta component is a hemoprotein. Requires siroheme as cofactor. The cofactor is [4Fe-4S] cluster.

The enzyme catalyses hydrogen sulfide + 3 NADP(+) + 3 H2O = sulfite + 3 NADPH + 4 H(+). It functions in the pathway sulfur metabolism; hydrogen sulfide biosynthesis; hydrogen sulfide from sulfite (NADPH route): step 1/1. Its function is as follows. Component of the sulfite reductase complex that catalyzes the 6-electron reduction of sulfite to sulfide. This is one of several activities required for the biosynthesis of L-cysteine from sulfate. The sequence is that of Sulfite reductase [NADPH] hemoprotein beta-component from Methylorubrum extorquens (strain ATCC 14718 / DSM 1338 / JCM 2805 / NCIMB 9133 / AM1) (Methylobacterium extorquens).